The chain runs to 115 residues: Large ribosomal subunit protein bL20 (115 aa).

This sequence belongs to the bacterial ribosomal protein bL20 family.

Functionally, binds directly to 23S ribosomal RNA and is necessary for the in vitro assembly process of the 50S ribosomal subunit. It is not involved in the protein synthesizing functions of that subunit. This chain is Large ribosomal subunit protein bL20, found in Synechococcus sp. (strain CC9902).